A 366-amino-acid chain; its full sequence is UDP-N-acetylglucosamine--N-acetylmuramyl-(pentapeptide) pyrophosphoryl-undecaprenol N-acetylglucosamine transferase (366 aa).

UDP-N-acetyl-alpha-D-glucosamine contacts are provided by residues 14 to 16 (TGG), asparagine 128, arginine 169, serine 201, isoleucine 251, and glutamine 296.

It belongs to the glycosyltransferase 28 family. MurG subfamily.

It is found in the cell inner membrane. It carries out the reaction di-trans,octa-cis-undecaprenyl diphospho-N-acetyl-alpha-D-muramoyl-L-alanyl-D-glutamyl-meso-2,6-diaminopimeloyl-D-alanyl-D-alanine + UDP-N-acetyl-alpha-D-glucosamine = di-trans,octa-cis-undecaprenyl diphospho-[N-acetyl-alpha-D-glucosaminyl-(1-&gt;4)]-N-acetyl-alpha-D-muramoyl-L-alanyl-D-glutamyl-meso-2,6-diaminopimeloyl-D-alanyl-D-alanine + UDP + H(+). It functions in the pathway cell wall biogenesis; peptidoglycan biosynthesis. Its function is as follows. Cell wall formation. Catalyzes the transfer of a GlcNAc subunit on undecaprenyl-pyrophosphoryl-MurNAc-pentapeptide (lipid intermediate I) to form undecaprenyl-pyrophosphoryl-MurNAc-(pentapeptide)GlcNAc (lipid intermediate II). This is UDP-N-acetylglucosamine--N-acetylmuramyl-(pentapeptide) pyrophosphoryl-undecaprenol N-acetylglucosamine transferase from Christiangramia forsetii (strain DSM 17595 / CGMCC 1.15422 / KT0803) (Gramella forsetii).